The chain runs to 440 residues: MVSSNQALLISPSIPYGEIAVPPSKSHSLRAILFASLSKGTSIIENCLFSPDSQTMLTACEKMGAHVRRIGDSLHIQGNPDPHHCHPPYFHMGNSGIALRFLTALSTLSPTPTLITGSHTLKRRPIAPLLSSLKQLGAHIRQKTSSSIPFTIHGPLSPGHVTISGQDSQYASALAITAALAPYPLSFSIENLKERPWFDLTLDWLHSLNISFLRDQDSLTFPGGQSLESFSYSVPGDYSSAAFLASFGLLSSSSKPTILRNLPSQDSQGDKLLFSLLKQLGAHILIEKHHIEMHPSSFSGGEIDMDPFIDALPILAVLCCFAKNPSRLYNALGAKDKESNRIEAIAHELQKMGGSVHPTRDGLYIEPSRLHGAVVDSHNDHRIAMALAVAGVHASSGQTLLCNTQCINKSFPHFVIAAQTLHANVRHYQADFPLRSSFCR.

The 3-phosphoshikimate site is built by Lys-25, Ser-26, and Arg-30. A phosphoenolpyruvate-binding site is contributed by Lys-25. Phosphoenolpyruvate-binding residues include Gly-96 and Arg-124. 3-phosphoshikimate-binding residues include Ser-168, Gln-169, Asp-310, and Lys-337. Residue Gln-169 participates in phosphoenolpyruvate binding. Asp-310 functions as the Proton acceptor in the catalytic mechanism. Arg-341, Arg-382, and Lys-409 together coordinate phosphoenolpyruvate.

This sequence belongs to the EPSP synthase family. As to quaternary structure, monomer.

Its subcellular location is the cytoplasm. It catalyses the reaction 3-phosphoshikimate + phosphoenolpyruvate = 5-O-(1-carboxyvinyl)-3-phosphoshikimate + phosphate. It functions in the pathway metabolic intermediate biosynthesis; chorismate biosynthesis; chorismate from D-erythrose 4-phosphate and phosphoenolpyruvate: step 6/7. In terms of biological role, catalyzes the transfer of the enolpyruvyl moiety of phosphoenolpyruvate (PEP) to the 5-hydroxyl of shikimate-3-phosphate (S3P) to produce enolpyruvyl shikimate-3-phosphate and inorganic phosphate. The protein is 3-phosphoshikimate 1-carboxyvinyltransferase of Chlamydia trachomatis serovar L2 (strain ATCC VR-902B / DSM 19102 / 434/Bu).